The sequence spans 264 residues: MHSCWNMKLQNEKTLGHSVSRSSNISKAGSPTSVSAPSRFPRTSVTPSSQDICRICHCEGDDESPLITPCHCTGSLHFVHQACLQQWIKSSDTRCCELCKFEFIMETKLKPLRKWEKLQMTASERRKIMCSVTFHVIAITCVVWSLYVLIDRTAEEIRMGQNNGILEWPFWTKLVVVAIGFTGGLLFMYVQCKVYVQLWKRLKAYNRVIYVQNCPETCKKKIFEKSVIIEPNLESKEALGIHHSDTNSSYYTEPEDCGAAILQV.

Positions 15–47 are disordered; it reads LGHSVSRSSNISKAGSPTSVSAPSRFPRTSVTP. Residues 16 to 47 show a composition bias toward polar residues; the sequence is GHSVSRSSNISKAGSPTSVSAPSRFPRTSVTP. Residues 45–106 form an RING-CH-type zinc finger; the sequence is VTPSSQDICR…ELCKFEFIME (62 aa). Positions 53, 56, 70, 72, 80, 83, 96, and 99 each coordinate Zn(2+). A run of 2 helical transmembrane segments spans residues 130–150 and 170–190; these read CSVT…YVLI and FWTK…FMYV.

It localises to the cytoplasmic vesicle membrane. The protein resides in the lysosome membrane. The protein localises to the early endosome membrane. It carries out the reaction S-ubiquitinyl-[E2 ubiquitin-conjugating enzyme]-L-cysteine + [acceptor protein]-L-lysine = [E2 ubiquitin-conjugating enzyme]-L-cysteine + N(6)-ubiquitinyl-[acceptor protein]-L-lysine.. Its pathway is protein modification; protein ubiquitination. In terms of biological role, E3 ubiquitin-protein ligase that mediates ubiquitination of cd86 and MHC class II proteins, such as hla-dr alpha and beta, and promotes their subsequent endocytosis and sorting to lysosomes via multivesicular bodies. The protein is E3 ubiquitin-protein ligase MARCHF8 (marchf8) of Xenopus laevis (African clawed frog).